Consider the following 423-residue polypeptide: MRKTIEPISGIKAQLSVPGSKSITHRALMLAALADDESEIRNPLVADDTTITADALVQMGVGVQWKPGSVLVAPPSKRWSQPSEPILLGNSGTSTRLLLALAATGVGDFTFDGAPRLRQRPVKPLVSALEMLGARFDCTETDGFLPLRVIAHGLSGGKVLVDARQSGQFLSAVLMAAPCAGGEVTVEWLEPVASYPYVAMTLAMMGERGIDFRKDRANRVIVPAPQRYAGGRWTVEADCSSASYLWAAAALTGGDVLTHPLSPDSLQGDCRFLGILERMGCRVTWEEDGVRVVSSGELRPVDLDLNEMPDMVPTLAILAAFAGGVSRIRNVAHLRVKESDRLQAVSSELGKLGVPNRELPDGLEIRGGAATSPKVGIDPHDDHRIAMAFAVAGLRVGGVEIEDAEVVAKSFPTFWETFEKLKS.

Residues Lys-21, Ser-22, and Arg-26 each coordinate 3-phosphoshikimate. Residue Lys-21 participates in phosphoenolpyruvate binding. Phosphoenolpyruvate-binding residues include Gly-92 and Arg-120. The 3-phosphoshikimate site is built by Ser-166, Gln-168, Ser-194, Asp-310, and Lys-337. Phosphoenolpyruvate is bound at residue Gln-168. The active-site Proton acceptor is Asp-310. Residues Arg-341, Arg-384, and Lys-409 each contribute to the phosphoenolpyruvate site.

Belongs to the EPSP synthase family. Monomer.

The protein resides in the cytoplasm. The enzyme catalyses 3-phosphoshikimate + phosphoenolpyruvate = 5-O-(1-carboxyvinyl)-3-phosphoshikimate + phosphate. It participates in metabolic intermediate biosynthesis; chorismate biosynthesis; chorismate from D-erythrose 4-phosphate and phosphoenolpyruvate: step 6/7. Catalyzes the transfer of the enolpyruvyl moiety of phosphoenolpyruvate (PEP) to the 5-hydroxyl of shikimate-3-phosphate (S3P) to produce enolpyruvyl shikimate-3-phosphate and inorganic phosphate. The protein is 3-phosphoshikimate 1-carboxyvinyltransferase of Syntrophobacter fumaroxidans (strain DSM 10017 / MPOB).